We begin with the raw amino-acid sequence, 260 residues long: Triosephosphate isomerase (260 aa).

11-13 (NWK) serves as a coordination point for substrate. His103 functions as the Electrophile in the catalytic mechanism. Glu175 serves as the catalytic Proton acceptor. Residues Gly181, Ser220, and 241–242 (GG) each bind substrate.

This sequence belongs to the triosephosphate isomerase family. As to quaternary structure, homodimer.

It is found in the cytoplasm. The catalysed reaction is D-glyceraldehyde 3-phosphate = dihydroxyacetone phosphate. It participates in carbohydrate biosynthesis; gluconeogenesis. It functions in the pathway carbohydrate degradation; glycolysis; D-glyceraldehyde 3-phosphate from glycerone phosphate: step 1/1. Involved in the gluconeogenesis. Catalyzes stereospecifically the conversion of dihydroxyacetone phosphate (DHAP) to D-glyceraldehyde-3-phosphate (G3P). In Shewanella frigidimarina (strain NCIMB 400), this protein is Triosephosphate isomerase.